The chain runs to 215 residues: Peptide methionine sulfoxide reductase MsrA (215 aa).

Residue cysteine 58 is part of the active site.

This sequence belongs to the MsrA Met sulfoxide reductase family.

It carries out the reaction L-methionyl-[protein] + [thioredoxin]-disulfide + H2O = L-methionyl-(S)-S-oxide-[protein] + [thioredoxin]-dithiol. It catalyses the reaction [thioredoxin]-disulfide + L-methionine + H2O = L-methionine (S)-S-oxide + [thioredoxin]-dithiol. Functionally, has an important function as a repair enzyme for proteins that have been inactivated by oxidation. Catalyzes the reversible oxidation-reduction of methionine sulfoxide in proteins to methionine. The chain is Peptide methionine sulfoxide reductase MsrA from Pseudomonas aeruginosa (strain UCBPP-PA14).